The following is a 105-amino-acid chain: UPF0145 protein LPC_0273 (105 aa).

It belongs to the UPF0145 family.

The chain is UPF0145 protein LPC_0273 from Legionella pneumophila (strain Corby).